Reading from the N-terminus, the 263-residue chain is 5'-nucleotidase SurE (263 aa).

Residues D8, D9, S40, and N98 each coordinate a divalent metal cation.

The protein belongs to the SurE nucleotidase family. The cofactor is a divalent metal cation.

It is found in the cytoplasm. The enzyme catalyses a ribonucleoside 5'-phosphate + H2O = a ribonucleoside + phosphate. Its function is as follows. Nucleotidase that shows phosphatase activity on nucleoside 5'-monophosphates. This Gloeobacter violaceus (strain ATCC 29082 / PCC 7421) protein is 5'-nucleotidase SurE.